A 148-amino-acid chain; its full sequence is 3-dehydroquinate dehydratase (148 aa).

Tyr-23 (proton acceptor) is an active-site residue. 3 residues coordinate substrate: Asn-75, His-81, and Asp-88. The active-site Proton donor is His-101. Substrate contacts are provided by residues 102-103 (LS) and Arg-112.

This sequence belongs to the type-II 3-dehydroquinase family. As to quaternary structure, homododecamer.

The catalysed reaction is 3-dehydroquinate = 3-dehydroshikimate + H2O. Its pathway is metabolic intermediate biosynthesis; chorismate biosynthesis; chorismate from D-erythrose 4-phosphate and phosphoenolpyruvate: step 3/7. Functionally, catalyzes a trans-dehydration via an enolate intermediate. The sequence is that of 3-dehydroquinate dehydratase from Xylella fastidiosa (strain 9a5c).